A 162-amino-acid polypeptide reads, in one-letter code: Toluate 1,2-dioxygenase subunit beta (162 aa).

It belongs to the bacterial ring-hydroxylating dioxygenase beta subunit family. As to quaternary structure, this dioxygenase system consists of three proteins: the two subunits of the hydroxylase component (XylX and XylY), and an electron transfer component (XylZ).

It participates in xenobiotic degradation; toluene degradation. The polypeptide is Toluate 1,2-dioxygenase subunit beta (xylY) (Pseudomonas putida (Arthrobacter siderocapsulatus)).